A 432-amino-acid chain; its full sequence is CBL-interacting serine/threonine-protein kinase 17 (432 aa).

One can recognise a Protein kinase domain in the interval 11 to 266; sequence YELGRTLGEG…IAGIKAHDWF (256 aa). ATP-binding positions include 17–25 and Lys40; that span reads LGEGNSAKV. The active-site Proton acceptor is the Asp134. The activation loop stretch occupies residues 152–181; it reads DFGLSALSQHYREDGLLHTTCGSPNYVAPE. Ser156 carries the phosphoserine modification. Phosphothreonine is present on Thr170. One can recognise an NAF domain in the interval 301–325; sequence DSPTIINAFQLIGMSSFLDLSGFFE. A PPI region spans residues 331-360; it reads ERQIRFTSNSLAKDLLENIETIFTEMGFCL.

The protein belongs to the protein kinase superfamily. CAMK Ser/Thr protein kinase family. SNF1 subfamily. Interacts with CBL1. Requires Mn(2+) as cofactor.

It catalyses the reaction L-seryl-[protein] + ATP = O-phospho-L-seryl-[protein] + ADP + H(+). The catalysed reaction is L-threonyl-[protein] + ATP = O-phospho-L-threonyl-[protein] + ADP + H(+). Its function is as follows. CIPK serine-threonine protein kinases interact with CBL proteins. Binding of a CBL protein to the regulatory NAF domain of CIPK protein lead to the activation of the kinase in a calcium-dependent manner. This is CBL-interacting serine/threonine-protein kinase 17 (CIPK17) from Arabidopsis thaliana (Mouse-ear cress).